Reading from the N-terminus, the 334-residue chain is tRNA uridine(34) hydroxylase (334 aa).

The Rhodanese domain occupies 123-217 (SDPDVILVDT…YLEEVKAEES (95 aa)). Residue Cys-177 is the Cysteine persulfide intermediate of the active site.

It belongs to the TrhO family.

It catalyses the reaction uridine(34) in tRNA + AH2 + O2 = 5-hydroxyuridine(34) in tRNA + A + H2O. Its function is as follows. Catalyzes oxygen-dependent 5-hydroxyuridine (ho5U) modification at position 34 in tRNAs. The sequence is that of tRNA uridine(34) hydroxylase from Shewanella baltica (strain OS223).